A 477-amino-acid chain; its full sequence is Proline--tRNA ligase (477 aa).

L-proline is bound by residues Thr-111, Glu-113, and Arg-142. ATP contacts are provided by Arg-142, Thr-153, Gln-225, and Thr-228. His-230 contributes to the L-proline binding site. 2 residues coordinate ATP: Ser-262 and Arg-264. Residues 340-369 (ELKGVPFRVELGPKDLEGGQAVLASRLGGK) are interaction with tRNA. 4 residues coordinate Zn(2+): Cys-427, Cys-432, Cys-458, and Cys-461.

The protein belongs to the class-II aminoacyl-tRNA synthetase family. ProS type 3 subfamily. Homodimer. Only one tRNA molecule binds per dimer.

Its subcellular location is the cytoplasm. The enzyme catalyses tRNA(Pro) + L-proline + ATP = L-prolyl-tRNA(Pro) + AMP + diphosphate. In terms of biological role, catalyzes the attachment of proline to tRNA(Pro) in a two-step reaction: proline is first activated by ATP to form Pro-AMP and then transferred to the acceptor end of tRNA(Pro). Can inadvertently accommodate and process cysteine. The polypeptide is Proline--tRNA ligase (proS) (Thermus thermophilus (strain ATCC 27634 / DSM 579 / HB8)).